The chain runs to 867 residues: Dynamin-1 (867 aa).

In terms of domain architecture, Dynamin-type G spans 28–294; the sequence is DLDLPQIAVV…LTNHIRDTLP (267 aa). The tract at residues 38–45 is G1 motif; that stretch reads GGQSAGKS. The GDP site is built by serine 41, glycine 43, lysine 44, serine 45, serine 46, arginine 59, and glycine 60. The tract at residues 64–66 is G2 motif; that stretch reads VTR. Tyrosine 80 carries the post-translational modification Phosphotyrosine. Tyrosine 125 carries the 3'-nitrotyrosine; alternate modification. Tyrosine 125 carries the phosphotyrosine; alternate modification. Positions 136-139 are G3 motif; the sequence is DLPG. The segment at 205-208 is G4 motif; that stretch reads TKLD. GDP contacts are provided by lysine 206, aspartate 208, aspartate 211, asparagine 236, arginine 237, and glutamine 239. A G5 motif region spans residues 235–238; the sequence is VNRS. Serine 306 and serine 347 each carry phosphoserine. Tyrosine 354 is subject to Phosphotyrosine. Position 512 is a phosphoserine (serine 512). Positions 515-625 constitute a PH domain; sequence QDEILVIRKG…WKASFLRAGV (111 aa). Residues 659–750 enclose the GED domain; that stretch reads VETIRNLVDS…IIGDINTTTV (92 aa). A disordered region spans residues 767-867; that stretch reads SVPAGRRSPT…HENRAGKARL (101 aa). Phosphoserine is present on residues serine 774 and serine 778. Arginine 796 is modified (omega-N-methylarginine). Serine 822 is subject to Phosphoserine. A compositionally biased stretch (pro residues) spans 825–843; it reads PFGPPPQVPSRPNRAPPGV. Residues glycine 847, leucine 851, and lysine 857 each carry the phosphoserine modification. Basic and acidic residues predominate over residues 856-867; it reads GKHENRAGKARL.

This sequence belongs to the TRAFAC class dynamin-like GTPase superfamily. Dynamin/Fzo/YdjA family. As to quaternary structure, homodimer; homodimerization is mediated by the dynamin-type G domain which promotes assembly-stimulated GTPase activity. Homo-tetramer formed from two dimers in the absence of lipid. Oligomerizes into a helical polymer that self-assembles around the vesicle membrane, when associated to the menbrane through lipid binding. Interacts (via C-terminal proline-rich domain (PRD)) with SNX9 (via SH3 domain); this interaction allows regulation of DNM1 self-assembly during late stages of endocytic vesicle formation and supports DNM1's early functions in accelerating clathrin-coated pits (CCPs) maturation in non neuronals cell. Interacts (via C-terminal proline-rich domain (PRD)) with MYO1E (via SH3 domain); this interaction regulates receptor-mediated endocytosis. Interacts with SNX33 (via SH3 domain); this interaction decreases DNM1-dependent endocytosis. Interacts with DIAPH1. Interacts with GRB2 (via SH3 domain); this interaction mediates disassembly of DNM1 polymers, therefore modulates self-assembly. Forms a complex with BIN1 (via SH3 domain) and SH3GL2 (via SH3 domain). Forms a complex with SH3GL2 (via SH3 domain) and AMPH (via SH3 domain). Forms a complex with SH3GL2 (via SH3 domain) and SYNJ1. Interacts (via C-terminal proline-rich domain (PRD)) with SYT1; this interaction facilitates vesicle fission during clathrin-mediated endocytosis (CME). Interacts (via C-terminal proline-rich domain (PRD)) with PLCG1 (via SH3 domain); this interaction stimulates the release of GDP from DNM1 and enhances DNM1-dependent endocytosis. Interacts with SNPH; this interaction inhibits the binding of DNM1 to AMPH and DNM1-receptor-mediated endocytosis. Interacts with CAV1. Interacts with SH3GLB1 (via SH3 domain). Interacts with PACSIN1 (via SH3 domain), PACSIN2 (via SH3 domain) and PACSIN3 (via SH3 domain). Interacts with UNC119; this interaction decreases DNM1's GTPase activity and affects DNM1's interaction with AMPH. Interacts with AMPH. Interacts (GTP-bound form) with DNAJC6; this interaction allows clathrin-coated vesicle (CCV) formation at the plasma membrane. In terms of processing, phosphorylation at Ser-774 by GSK3B/GSK3-beta leads to inactivation of receptor-mediated endocytosis in non-neuronal cells. Dephosphorylation at Ser-774, through the EGFR downstream signaling, leads to activation and regulates early stages of clathrin-mediated endocytosis (CME). Phosphorylated on Tyr in response to EGF stimulation in cells expressing truncated EGFR. Phosphorylated by CDK5 leading to synaptic vesicle endocytosis (SVE) activation. Expressed exclusively in the brain.

Its subcellular location is the cell membrane. It is found in the membrane. It localises to the clathrin-coated pit. The protein resides in the cytoplasmic vesicle. The protein localises to the presynapse. Its subcellular location is the secretory vesicle. It is found in the chromaffin granule. It carries out the reaction GTP + H2O = GDP + phosphate + H(+). Its function is as follows. Catalyzes the hydrolysis of GTP and utilizes this energy to mediate vesicle scission and participates in many forms of endocytosis, such as clathrin-mediated endocytosis or synaptic vesicle endocytosis as well as rapid endocytosis (RE). Associates to the membrane, through lipid binding, and self-assembles into rings and stacks of interconnected rings through oligomerization to form a helical polymer around the vesicle membrane leading to constriction of invaginated coated pits around their necks. Self-assembly of the helical polymer induces membrane tubules narrowing until the polymer reaches a length sufficient to trigger GTP hydrolysis. Depending on the curvature imposed on the tubules, membrane detachment from the helical polymer upon GTP hydrolysis can cause spontaneous hemifission followed by complete fission. May play a role in regulating early stages of clathrin-mediated endocytosis in non-neuronal cells through its activation by dephosphorylation via the signaling downstream of EGFR. Controls vesicle size at a step before fission, during formation of membrane pits, at hippocampal synapses. Controls plastic adaptation of the synaptic vesicle recycling machinery to high levels of activity. Mediates rapid endocytosis (RE), a Ca(2+)-dependent and clathrin- and K(+)-independent process in chromaffin cells. Microtubule-associated force-producing protein involved in producing microtubule bundles and able to bind and hydrolyze GTP. Through its interaction with DNAJC6, acts during the early steps of clathrin-coated vesicle (CCV) formation. The polypeptide is Dynamin-1 (Mus musculus (Mouse)).